Consider the following 120-residue polypeptide: Small ribosomal subunit protein uS13m (120 aa).

It belongs to the universal ribosomal protein uS13 family. As to quaternary structure, part of the small ribosomal subunit.

The protein localises to the mitochondrion. In terms of biological role, located at the top of the head of the small subunit, it contacts several helices of the 18S rRNA. The chain is Small ribosomal subunit protein uS13m (RPS13) from Marchantia polymorpha (Common liverwort).